Reading from the N-terminus, the 316-residue chain is Leucine-rich repeat-containing protein 73 (316 aa).

LRR repeat units follow at residues 57 to 78 (SLAQLNLNLGVVSSPSRIKQLA), 86 to 106 (SIQSLFLHGSPLTDAGLALLN), 114 to 137 (ALVALDLGDCMLGDEAINLICGLL), 145 to 166 (GLKELTLSANPGITPKGWSRLA), 174 to 187 (QVRVLNLDYNPLGD), 202 to 223 (TLEVLDLEGTGLTNQSAQTLLD), and 231 to 250 (ALRSLVLAENSISPELQQQI). The disordered stretch occupies residues 257–296 (GEEEEEVAGGAGDTQEWERGREPAAHQRGSSSWMCPSDPS). Basic and acidic residues predominate over residues 272 to 281 (EWERGREPAA). Residues 286-296 (SSSWMCPSDPS) show a composition bias toward low complexity.

In Homo sapiens (Human), this protein is Leucine-rich repeat-containing protein 73 (LRRC73).